Consider the following 353-residue polypeptide: Phospho-N-acetylmuramoyl-pentapeptide-transferase (353 aa).

Helical transmembrane passes span 22 to 42 (FAFF…ITWA), 65 to 85 (TPTM…LFCI), 88 to 108 (DNIF…IGLI), 129 to 149 (LLAQ…SSEL), 161 to 181 (PLFD…ISSS), 192 to 212 (GLAT…LYLS), 228 to 248 (GLGE…GFLW), 256 to 276 (VFMG…LAII), 281 to 301 (ILLL…ILQV), and 330 to 350 (KIIV…LASI).

Belongs to the glycosyltransferase 4 family. MraY subfamily. Mg(2+) serves as cofactor.

The protein localises to the cell inner membrane. It catalyses the reaction UDP-N-acetyl-alpha-D-muramoyl-L-alanyl-gamma-D-glutamyl-meso-2,6-diaminopimeloyl-D-alanyl-D-alanine + di-trans,octa-cis-undecaprenyl phosphate = di-trans,octa-cis-undecaprenyl diphospho-N-acetyl-alpha-D-muramoyl-L-alanyl-D-glutamyl-meso-2,6-diaminopimeloyl-D-alanyl-D-alanine + UMP. The protein operates within cell wall biogenesis; peptidoglycan biosynthesis. Its function is as follows. Catalyzes the initial step of the lipid cycle reactions in the biosynthesis of the cell wall peptidoglycan: transfers peptidoglycan precursor phospho-MurNAc-pentapeptide from UDP-MurNAc-pentapeptide onto the lipid carrier undecaprenyl phosphate, yielding undecaprenyl-pyrophosphoryl-MurNAc-pentapeptide, known as lipid I. This chain is Phospho-N-acetylmuramoyl-pentapeptide-transferase, found in Campylobacter jejuni subsp. jejuni serotype O:6 (strain 81116 / NCTC 11828).